A 412-amino-acid chain; its full sequence is Divalent metal cation transporter MntH (412 aa).

Over 1 to 19 the chain is Cytoplasmic; that stretch reads MTNYRVESSSGRAARKMRL. Residues 20-39 traverse the membrane as a helical segment; that stretch reads ALMGPAFIAAIGYIDPGNFA. The Periplasmic portion of the chain corresponds to 40–51; it reads TNIQAGASFGYQ. A helical membrane pass occupies residues 52 to 71; sequence LLWVVVWANLMAMLIQILSA. At 72-95 the chain is on the cytoplasmic side; sequence KLGIATGKNLAEQIRDHYPRPVVW. The chain crosses the membrane as a helical span at residues 96–118; the sequence is FYWVQAEIIAMATDLAEFIGAAI. Topologically, residues 119 to 125 are periplasmic; sequence GFKLILG. The chain crosses the membrane as a helical span at residues 126–145; that stretch reads VSLLQGAVLTGIATFLILML. Topologically, residues 146 to 155 are cytoplasmic; the sequence is QRRGQKPLEK. The helical transmembrane segment at 156–175 threads the bilayer; that stretch reads VIGGLLLFVAAAYIVELIFS. Over 176 to 196 the chain is Periplasmic; sequence QPNLAQLGKGMVIPSLPTSEA. A helical transmembrane segment spans residues 197-220; the sequence is VFLAAGVLGATIMPHVIYLHSSLT. Topologically, residues 221 to 238 are cytoplasmic; sequence QHLHGGSRQQRYSATKWD. A helical transmembrane segment spans residues 239–258; the sequence is VAIAMTIAGFVNLVMMATAA. The Periplasmic segment spans residues 259-276; it reads AAFHFSGHTGVADLDEAY. Residues 277 to 297 form a helical membrane-spanning segment; the sequence is LTLQPLLSHAAATVFGLSLVA. Topologically, residues 298–327 are cytoplasmic; that stretch reads AGLSSTVVGTLAGQVVMQGFIRFHIPLWVR. A helical membrane pass occupies residues 328 to 344; that stretch reads RTVTMLPSFIVILMGLD. Residues 345–350 are Periplasmic-facing; it reads PTRILV. A helical transmembrane segment spans residues 351–370; the sequence is MSQVLLSFGIALALVPLLIF. Over 371–387 the chain is Cytoplasmic; it reads TSDSKLMGDLVNSKRVK. Residues 388 to 406 form a helical membrane-spanning segment; that stretch reads QTGWVIVVLVVALNIWLLV. Over 407–412 the chain is Periplasmic; the sequence is GTALGL.

It belongs to the NRAMP family.

The protein localises to the cell inner membrane. Functionally, h(+)-stimulated, divalent metal cation uptake system. This chain is Divalent metal cation transporter MntH, found in Shigella flexneri serotype 5b (strain 8401).